Reading from the N-terminus, the 244-residue chain is Exosome complex component Rrp41 (244 aa).

The protein belongs to the RNase PH family. Rrp41 subfamily. As to quaternary structure, component of the archaeal exosome complex. Forms a hexameric ring-like arrangement composed of 3 Rrp41-Rrp42 heterodimers. The hexameric ring associates with a trimer of Rrp4 and/or Csl4 subunits.

It is found in the cytoplasm. Catalytic component of the exosome, which is a complex involved in RNA degradation. Has 3'-&gt;5' exoribonuclease activity. Can also synthesize heteromeric RNA-tails. This Nitrosopumilus maritimus (strain SCM1) protein is Exosome complex component Rrp41.